Here is a 635-residue protein sequence, read N- to C-terminus: Very-long-chain aldehyde decarbonylase GL1-6 (635 aa).

A run of 4 helical transmembrane segments spans residues 46-66, 100-120, 127-147, and 183-203; these read LLNF…QLWI, IILT…AQVA, GMVV…YWLH, and VVYF…GTVS. In terms of domain architecture, Fatty acid hydroxylase spans 139–273; that stretch reads VEFLYYWLHR…MPVYDYIYGT (135 aa).

This sequence belongs to the sterol desaturase family. Homodimer. As to expression, expressed in germinating seeds and shoots.

It is found in the endoplasmic reticulum membrane. It catalyses the reaction a long-chain fatty aldehyde + 2 NADPH + O2 + H(+) = a long-chain alkane + formate + 2 NADP(+) + H2O. In terms of biological role, aldehyde decarbonylase involved in the conversion of aldehydes to alkanes. Core component of a very-long-chain alkane synthesis complex. This chain is Very-long-chain aldehyde decarbonylase GL1-6, found in Oryza sativa subsp. japonica (Rice).